The chain runs to 239 residues: Ribonuclease 3 (239 aa).

The RNase III domain maps to 11–133 (HTAIQKKLGY…MFAAVSFDAD (123 aa)). Position 46 (glutamate 46) interacts with Mg(2+). The active site involves aspartate 50. Mg(2+) is bound by residues aspartate 119 and glutamate 122. Glutamate 122 is an active-site residue. Residues 160 to 230 (DGKTALQEAL…AKEALKWLEE (71 aa)) form the DRBM domain.

Belongs to the ribonuclease III family. In terms of assembly, homodimer. Requires Mg(2+) as cofactor.

It localises to the cytoplasm. The enzyme catalyses Endonucleolytic cleavage to 5'-phosphomonoester.. Digests double-stranded RNA. Involved in the processing of primary rRNA transcript to yield the immediate precursors to the large and small rRNAs (23S and 16S). Processes some mRNAs, and tRNAs when they are encoded in the rRNA operon. Processes pre-crRNA and tracrRNA of type II CRISPR loci if present in the organism. The polypeptide is Ribonuclease 3 (Neisseria gonorrhoeae (strain NCCP11945)).